Reading from the N-terminus, the 344-residue chain is Meiotic recombination protein DMC1 homolog A (344 aa).

133–140 lines the ATP pocket; it reads GEFRSGKT. R235 is a binding site for dsDNA. R235, F238, R241, R247, and R315 together coordinate ssDNA. 2 residues coordinate dsDNA: R241 and R247.

The protein belongs to the RecA family. DMC1 subfamily. As to expression, expressed in pollen mother cells and root tips.

The protein localises to the nucleus. In terms of biological role, recombinase that may participate in meiotic recombination, specifically in homologous strand assimilation, which is required for the resolution of meiotic double-strand breaks. Exhibits DNA-dependent ATPase activity when bound to single-stranded DNA (ssDNA). Mediates renaturation of homologous complementary strands as well as assimilation of single strands into homologous supercoiled duplexes leading to D-loop formation. Binds circular single-stranded DNA (ssDNA) and circular double-stranded DNA (dsDNA) in vitro. Catalyzes DNA homologous renaturation and DNA strand exchange. The rates of these activities are dependent on the state of ATP hydrolysis. Forms helical filaments along ssDNA and dsDNA, and promotes strand exchange between ssDNA and dsDNA with long DNA substrates of several thousand base pairs. The presence of the replication protein A is not required for this activity. Seems to be required for homologous pairing and subsequent chromosome segregation during male meiosis. May be not directly required for homologous pairing during male meiosis. Required for synaptonemal complex assembly and crossover formation. Functions redundantly with DMC1B. The sequence is that of Meiotic recombination protein DMC1 homolog A from Oryza sativa subsp. indica (Rice).